The sequence spans 256 residues: 6-carboxyhexanoate--CoA ligase (256 aa).

This sequence belongs to the BioW family. As to quaternary structure, homodimer. Mg(2+) serves as cofactor.

It carries out the reaction heptanedioate + ATP + CoA = 6-carboxyhexanoyl-CoA + AMP + diphosphate. It functions in the pathway metabolic intermediate metabolism; pimeloyl-CoA biosynthesis; pimeloyl-CoA from pimelate: step 1/1. Catalyzes the transformation of pimelate into pimeloyl-CoA with concomitant hydrolysis of ATP to AMP. The chain is 6-carboxyhexanoate--CoA ligase from Methanobrevibacter ruminantium (strain ATCC 35063 / DSM 1093 / JCM 13430 / OCM 146 / M1) (Methanobacterium ruminantium).